A 223-amino-acid polypeptide reads, in one-letter code: Large ribosomal subunit protein bL21 (223 aa).

The tract at residues Thr110–Lys149 is disordered. Residues Pro133 to Pro147 show a composition bias toward basic and acidic residues.

Belongs to the bacterial ribosomal protein bL21 family. Part of the 50S ribosomal subunit. Contacts protein L20.

This protein binds to 23S rRNA in the presence of protein L20. In Maricaulis maris (strain MCS10) (Caulobacter maris), this protein is Large ribosomal subunit protein bL21.